The sequence spans 284 residues: 2-dehydro-3-deoxyphosphooctonate aldolase (284 aa).

Belongs to the KdsA family.

The protein resides in the cytoplasm. The catalysed reaction is D-arabinose 5-phosphate + phosphoenolpyruvate + H2O = 3-deoxy-alpha-D-manno-2-octulosonate-8-phosphate + phosphate. It participates in carbohydrate biosynthesis; 3-deoxy-D-manno-octulosonate biosynthesis; 3-deoxy-D-manno-octulosonate from D-ribulose 5-phosphate: step 2/3. Its pathway is bacterial outer membrane biogenesis; lipopolysaccharide biosynthesis. The sequence is that of 2-dehydro-3-deoxyphosphooctonate aldolase from Edwardsiella ictaluri (strain 93-146).